We begin with the raw amino-acid sequence, 434 residues long: E3 ubiquitin-protein ligase siah-1 (434 aa).

Positions phenylalanine 27–proline 88 are disordered. Over residues serine 43–serine 55 the composition is skewed to low complexity. A compositionally biased stretch (polar residues) spans methionine 74–proline 88. The segment at cysteine 171–arginine 206 adopts an RING-type; degenerate zinc-finger fold. The SBD stretch occupies residues isoleucine 220–isoleucine 415. The SIAH-type; degenerate zinc-finger motif lies at threonine 223–lysine 283. Residues cysteine 228, cysteine 235, histidine 247, cysteine 251, cysteine 258, cysteine 265, histidine 277, and histidine 282 each coordinate Zn(2+).

The protein belongs to the SINA (Seven in absentia) family. In terms of assembly, interacts with tir-1.

It carries out the reaction S-ubiquitinyl-[E2 ubiquitin-conjugating enzyme]-L-cysteine + [acceptor protein]-L-lysine = [E2 ubiquitin-conjugating enzyme]-L-cysteine + N(6)-ubiquitinyl-[acceptor protein]-L-lysine.. It participates in protein modification; protein ubiquitination. E3 ubiquitin-protein ligase that mediates ubiquitination and subsequent proteasomal degradation of target proteins. E3 ubiquitin ligases accept ubiquitin from an E2 ubiquitin-conjugating enzyme in the form of a thioester and then directly transfers the ubiquitin to targeted substrates. It probably triggers the ubiquitin-mediated degradation of different substrates. This is E3 ubiquitin-protein ligase siah-1 from Caenorhabditis briggsae.